A 488-amino-acid chain; its full sequence is 1-aminocyclopropane-1-carboxylate synthase-like protein 1 (488 aa).

Position 273 is an N6-(pyridoxal phosphate)lysine (Lys-273).

The protein belongs to the class-I pyridoxal-phosphate-dependent aminotransferase family. In terms of assembly, homodimer. Expressed in young leaves and flowers. Not expressed in roots.

The protein is 1-aminocyclopropane-1-carboxylate synthase-like protein 1 (ACS1) of Arabidopsis thaliana (Mouse-ear cress).